The sequence spans 80 residues: Protein Vpy (80 aa).

This chain is Protein Vpy (vpy), found in Bos taurus (Bovine).